The following is a 501-amino-acid chain: Cobyric acid synthase (501 aa).

The region spanning 251-446 is the GATase cobBQ-type domain; the sequence is NIDIAIIRLS…LHGIFDSEEF (196 aa). The Nucleophile role is filled by Cys-332. His-438 is a catalytic residue.

This sequence belongs to the CobB/CobQ family. CobQ subfamily.

It functions in the pathway cofactor biosynthesis; adenosylcobalamin biosynthesis. Its function is as follows. Catalyzes amidations at positions B, D, E, and G on adenosylcobyrinic A,C-diamide. NH(2) groups are provided by glutamine, and one molecule of ATP is hydrogenolyzed for each amidation. The polypeptide is Cobyric acid synthase (Clostridium botulinum (strain Alaska E43 / Type E3)).